The primary structure comprises 89 residues: uncharacterized protein (89 aa).

This is an uncharacterized protein from Sinorhizobium fredii (strain NBRC 101917 / NGR234).